The following is a 445-amino-acid chain: Serine protease inhibitor A3F (445 aa).

N-linked (GlcNAc...) asparagine glycans are attached at residues asparagine 28, asparagine 94, asparagine 174, and asparagine 259. The RCL stretch occupies residues 357–382 (GTEAAAGTGYQNLQCCQGVIYSMKIY).

Belongs to the serpin family.

In Mus musculus (Mouse), this protein is Serine protease inhibitor A3F (Serpina3f).